A 76-amino-acid polypeptide reads, in one-letter code: Small ribosomal subunit protein bS18 (76 aa).

The protein belongs to the bacterial ribosomal protein bS18 family. In terms of assembly, part of the 30S ribosomal subunit. Forms a tight heterodimer with protein bS6.

In terms of biological role, binds as a heterodimer with protein bS6 to the central domain of the 16S rRNA, where it helps stabilize the platform of the 30S subunit. The chain is Small ribosomal subunit protein bS18 from Desulfitobacterium hafniense (strain Y51).